A 729-amino-acid polypeptide reads, in one-letter code: Fatty acid oxidation complex subunit alpha (729 aa).

An enoyl-CoA hydratase/isomerase region spans residues 1-189 (MLYKGDTLYL…KIGLVDGVVK (189 aa)). Asp296 serves as a coordination point for substrate. Positions 311-729 (ETPKQAAVLG…ARAVGDLKTA (419 aa)) are 3-hydroxyacyl-CoA dehydrogenase. Residues Met324, Asp343, 400-402 (VVE), Lys407, and Ser429 each bind NAD(+). The For 3-hydroxyacyl-CoA dehydrogenase activity role is filled by His450. Asn453 provides a ligand contact to NAD(+). Substrate contacts are provided by Asn500 and Tyr660.

It in the N-terminal section; belongs to the enoyl-CoA hydratase/isomerase family. This sequence in the C-terminal section; belongs to the 3-hydroxyacyl-CoA dehydrogenase family. In terms of assembly, heterotetramer of two alpha chains (FadB) and two beta chains (FadA).

The enzyme catalyses a (3S)-3-hydroxyacyl-CoA + NAD(+) = a 3-oxoacyl-CoA + NADH + H(+). It catalyses the reaction a (3S)-3-hydroxyacyl-CoA = a (2E)-enoyl-CoA + H2O. The catalysed reaction is a 4-saturated-(3S)-3-hydroxyacyl-CoA = a (3E)-enoyl-CoA + H2O. It carries out the reaction (3S)-3-hydroxybutanoyl-CoA = (3R)-3-hydroxybutanoyl-CoA. The enzyme catalyses a (3Z)-enoyl-CoA = a 4-saturated (2E)-enoyl-CoA. It catalyses the reaction a (3E)-enoyl-CoA = a 4-saturated (2E)-enoyl-CoA. The protein operates within lipid metabolism; fatty acid beta-oxidation. In terms of biological role, involved in the aerobic and anaerobic degradation of long-chain fatty acids via beta-oxidation cycle. Catalyzes the formation of 3-oxoacyl-CoA from enoyl-CoA via L-3-hydroxyacyl-CoA. It can also use D-3-hydroxyacyl-CoA and cis-3-enoyl-CoA as substrate. The chain is Fatty acid oxidation complex subunit alpha from Escherichia fergusonii (strain ATCC 35469 / DSM 13698 / CCUG 18766 / IAM 14443 / JCM 21226 / LMG 7866 / NBRC 102419 / NCTC 12128 / CDC 0568-73).